Consider the following 211-residue polypeptide: Ribosomal RNA small subunit methyltransferase G (211 aa).

S-adenosyl-L-methionine-binding positions include G75, L80, 130-131 (VE), and R145.

It belongs to the methyltransferase superfamily. RNA methyltransferase RsmG family.

The protein localises to the cytoplasm. It catalyses the reaction guanosine(527) in 16S rRNA + S-adenosyl-L-methionine = N(7)-methylguanosine(527) in 16S rRNA + S-adenosyl-L-homocysteine. Its function is as follows. Specifically methylates the N7 position of guanine in position 527 of 16S rRNA. The sequence is that of Ribosomal RNA small subunit methyltransferase G from Aromatoleum aromaticum (strain DSM 19018 / LMG 30748 / EbN1) (Azoarcus sp. (strain EbN1)).